The sequence spans 366 residues: ATP-dependent 6-phosphofructokinase 2 (366 aa).

ATP contacts are provided by residues Gly-15, 78 to 79, and 119 to 122; these read KD and GDGT. Asp-120 provides a ligand contact to Mg(2+). Substrate-binding positions include 142–144, Arg-179, 186–188, Glu-239, Arg-284, and 290–293; these read TID, MGR, and HIQR. The active-site Proton acceptor is Asp-144.

Belongs to the phosphofructokinase type A (PFKA) family. Mixed-substrate PFK group III subfamily. In terms of assembly, homodimer or homotetramer. Requires Mg(2+) as cofactor.

The protein localises to the cytoplasm. The catalysed reaction is beta-D-fructose 6-phosphate + ATP = beta-D-fructose 1,6-bisphosphate + ADP + H(+). Its pathway is carbohydrate degradation; glycolysis; D-glyceraldehyde 3-phosphate and glycerone phosphate from D-glucose: step 3/4. Subject to allosteric activation by ADP and other diphosphonucleosides, and inhibition by phosphoenolpyruvate. In terms of biological role, catalyzes the phosphorylation of D-fructose 6-phosphate to fructose 1,6-bisphosphate by ATP, the first committing step of glycolysis. This is ATP-dependent 6-phosphofructokinase 2 from Clostridium perfringens (strain 13 / Type A).